The primary structure comprises 101 residues: NAD(P)H-quinone oxidoreductase subunit 4L, chloroplastic (101 aa).

A run of 3 helical transmembrane segments spans residues 2–22 (MTEY…YGLI), 32–52 (MCLE…SDLF), and 61–81 (IFSI…PAIV).

It belongs to the complex I subunit 4L family. NDH is composed of at least 16 different subunits, 5 of which are encoded in the nucleus.

The protein resides in the plastid. Its subcellular location is the chloroplast thylakoid membrane. The enzyme catalyses a plastoquinone + NADH + (n+1) H(+)(in) = a plastoquinol + NAD(+) + n H(+)(out). It carries out the reaction a plastoquinone + NADPH + (n+1) H(+)(in) = a plastoquinol + NADP(+) + n H(+)(out). NDH shuttles electrons from NAD(P)H:plastoquinone, via FMN and iron-sulfur (Fe-S) centers, to quinones in the photosynthetic chain and possibly in a chloroplast respiratory chain. The immediate electron acceptor for the enzyme in this species is believed to be plastoquinone. Couples the redox reaction to proton translocation, and thus conserves the redox energy in a proton gradient. The sequence is that of NAD(P)H-quinone oxidoreductase subunit 4L, chloroplastic from Calycanthus floridus var. glaucus (Eastern sweetshrub).